Reading from the N-terminus, the 390-residue chain is Formate-dependent phosphoribosylglycinamide formyltransferase (390 aa).

N(1)-(5-phospho-beta-D-ribosyl)glycinamide-binding positions include 14 to 15 (EL) and Glu-74. ATP contacts are provided by residues Arg-106, Lys-147, 152 to 157 (SSGKGQ), 187 to 190 (EQFI), and Glu-195. The 194-residue stretch at 111–304 (DLAAQELGIT…EFDLHARAIM (194 aa)) folds into the ATP-grasp domain. Positions 263 and 275 each coordinate Mg(2+). N(1)-(5-phospho-beta-D-ribosyl)glycinamide contacts are provided by residues Asp-282, Lys-351, and 358–359 (RR).

The protein belongs to the PurK/PurT family. In terms of assembly, homodimer.

It carries out the reaction N(1)-(5-phospho-beta-D-ribosyl)glycinamide + formate + ATP = N(2)-formyl-N(1)-(5-phospho-beta-D-ribosyl)glycinamide + ADP + phosphate + H(+). Its pathway is purine metabolism; IMP biosynthesis via de novo pathway; N(2)-formyl-N(1)-(5-phospho-D-ribosyl)glycinamide from N(1)-(5-phospho-D-ribosyl)glycinamide (formate route): step 1/1. Functionally, involved in the de novo purine biosynthesis. Catalyzes the transfer of formate to 5-phospho-ribosyl-glycinamide (GAR), producing 5-phospho-ribosyl-N-formylglycinamide (FGAR). Formate is provided by PurU via hydrolysis of 10-formyl-tetrahydrofolate. In Erythrobacter litoralis (strain HTCC2594), this protein is Formate-dependent phosphoribosylglycinamide formyltransferase.